A 152-amino-acid chain; its full sequence is FAD synthase (152 aa).

ATP is bound by residues 9 to 10, 14 to 17, and Asp-92; these read TF and HPGH.

It belongs to the archaeal FAD synthase family. As to quaternary structure, homodimer. A divalent metal cation is required as a cofactor.

It carries out the reaction FMN + ATP + H(+) = FAD + diphosphate. It functions in the pathway cofactor biosynthesis; FAD biosynthesis; FAD from FMN: step 1/1. Catalyzes the transfer of the AMP portion of ATP to flavin mononucleotide (FMN) to produce flavin adenine dinucleotide (FAD) coenzyme. The protein is FAD synthase of Ferroglobus placidus (strain DSM 10642 / AEDII12DO).